The chain runs to 151 residues: Protein InSETG-4 (151 aa).

Its subcellular location is the cytoplasm. It is found in the cytosol. This is Protein InSETG-4 (InSet4-G) from Homo sapiens (Human).